The chain runs to 198 residues: Dephospho-CoA kinase (198 aa).

The 196-residue stretch at 3 to 198 (LIGLTGGIAS…VDALWAGLRG (196 aa)) folds into the DPCK domain. 11-16 (ASGKST) serves as a coordination point for ATP.

It belongs to the CoaE family.

It is found in the cytoplasm. It carries out the reaction 3'-dephospho-CoA + ATP = ADP + CoA + H(+). It participates in cofactor biosynthesis; coenzyme A biosynthesis; CoA from (R)-pantothenate: step 5/5. Functionally, catalyzes the phosphorylation of the 3'-hydroxyl group of dephosphocoenzyme A to form coenzyme A. This chain is Dephospho-CoA kinase, found in Leifsonia xyli subsp. xyli (strain CTCB07).